The following is a 101-amino-acid chain: Urease subunit beta (101 aa).

Belongs to the urease beta subunit family. As to quaternary structure, heterotrimer of UreA (gamma), UreB (beta) and UreC (alpha) subunits. Three heterotrimers associate to form the active enzyme.

It is found in the cytoplasm. It catalyses the reaction urea + 2 H2O + H(+) = hydrogencarbonate + 2 NH4(+). The protein operates within nitrogen metabolism; urea degradation; CO(2) and NH(3) from urea (urease route): step 1/1. This chain is Urease subunit beta, found in Thermosynechococcus vestitus (strain NIES-2133 / IAM M-273 / BP-1).